Reading from the N-terminus, the 255-residue chain is Small ribosomal subunit protein eS1 (255 aa).

Over residues 1 to 18 (MAVGKNKRLSKGKKGLKK) the composition is skewed to basic residues. The tract at residues 1–20 (MAVGKNKRLSKGKKGLKKRV) is disordered. Alanine 2 bears the N-acetylalanine; partial mark.

The protein belongs to the eukaryotic ribosomal protein eS1 family. Component of the small ribosomal subunit. Mature ribosomes consist of a small (40S) and a large (60S) subunit. The 40S subunit contains about 33 different proteins and 1 molecule of RNA (18S). The 60S subunit contains about 49 different proteins and 3 molecules of RNA (25S, 5.8S and 5S).

It is found in the cytoplasm. This is Small ribosomal subunit protein eS1 from Coccidioides immitis (strain RS) (Valley fever fungus).